A 986-amino-acid chain; its full sequence is Probable serine/threonine-protein kinase DDB_G0272092 (986 aa).

The region spanning 1–107 (MARKIGSVRI…EYIVDTTKWY (107 aa)) is the C2 domain. Residues D22, D28, D76, D78, S81, and D84 each contribute to the Ca(2+) site. ANK repeat units lie at residues 137 to 167 (PEKS…DYTI), 171 to 201 (EGTP…RVSI), 205 to 238 (HGNT…GIND), 242 to 274 (LGET…IINH), 278 to 307 (TRDT…NVMI), and 312 to 344 (PSRT…WLNE). In terms of domain architecture, SAM spans 333-396 (EKVIEISDWL…LRAVRKIKDP (64 aa)). Over residues 412-438 (HVENDNNNNNNNNNNNNNSQEQCNINN) the composition is skewed to low complexity. Disordered stretches follow at residues 412–520 (HVEN…SNTT) and 532–574 (TTLT…PEGP). Residues 439-448 (DSLGSGNRNS) show a composition bias toward polar residues. The segment covering 454 to 464 (QNQNNTLNNNN) has biased composition (low complexity). A compositionally biased stretch (polar residues) spans 465 to 476 (VESKSTGNLNSL). 2 stretches are compositionally biased toward low complexity: residues 493-520 (NILS…SNTT) and 546-571 (TEST…TVTP). A Protein kinase domain is found at 601-870 (LTYNVLLGTG…ELLKIRDEYN (270 aa)). ATP-binding positions include 607–615 (LGTGASGKV) and K628. Residue D722 is the Proton acceptor of the active site. Low complexity-rich tracts occupy residues 901-913 (DSNN…NNNN) and 928-947 (SNSN…SDNN). Residues 901–986 (DSNNINNNNN…SPMEPKSIKK (86 aa)) form a disordered region. Polar residues-rich tracts occupy residues 948–959 (ISEPATTDSITK) and 969–978 (LTRTRSSSSP).

Belongs to the protein kinase superfamily. TKL Ser/Thr protein kinase family. Ca(2+) is required as a cofactor.

The enzyme catalyses L-seryl-[protein] + ATP = O-phospho-L-seryl-[protein] + ADP + H(+). It carries out the reaction L-threonyl-[protein] + ATP = O-phospho-L-threonyl-[protein] + ADP + H(+). This Dictyostelium discoideum (Social amoeba) protein is Probable serine/threonine-protein kinase DDB_G0272092.